We begin with the raw amino-acid sequence, 259 residues long: 14-3-3-like protein GF14 omega (259 aa).

Phosphoserine occurs at positions 67, 109, and 190. T211 is modified (phosphothreonine).

The protein belongs to the 14-3-3 family. As to quaternary structure, interacts with CINV1.

The protein localises to the nucleus. Its subcellular location is the cytoplasm. Its function is as follows. Is associated with a DNA binding complex that binds to the G box, a well-characterized cis-acting DNA regulatory element found in plant genes. The polypeptide is 14-3-3-like protein GF14 omega (GRF2) (Arabidopsis thaliana (Mouse-ear cress)).